We begin with the raw amino-acid sequence, 465 residues long: Glutamate--tRNA ligase (465 aa).

Positions 10 to 20 match the 'HIGH' region motif; it reads PSPTGQLHIGG. Residues cysteine 99, cysteine 101, cysteine 126, and glutamate 128 each contribute to the Zn(2+) site. A 'KMSKS' region motif is present at residues 236 to 240; that stretch reads KLSKR. Lysine 239 contributes to the ATP binding site.

This sequence belongs to the class-I aminoacyl-tRNA synthetase family. Glutamate--tRNA ligase type 1 subfamily. As to quaternary structure, monomer. It depends on Zn(2+) as a cofactor.

It localises to the cytoplasm. It carries out the reaction tRNA(Glu) + L-glutamate + ATP = L-glutamyl-tRNA(Glu) + AMP + diphosphate. Functionally, catalyzes the attachment of glutamate to tRNA(Glu) in a two-step reaction: glutamate is first activated by ATP to form Glu-AMP and then transferred to the acceptor end of tRNA(Glu). The sequence is that of Glutamate--tRNA ligase from Lawsonia intracellularis (strain PHE/MN1-00).